The sequence spans 700 residues: Elongation factor G (700 aa).

In terms of domain architecture, tr-type G spans Ser10–Leu286. GTP-binding positions include Ala19–Thr26, Asp83–His87, and Asn137–Asp140.

Belongs to the TRAFAC class translation factor GTPase superfamily. Classic translation factor GTPase family. EF-G/EF-2 subfamily.

It localises to the cytoplasm. Catalyzes the GTP-dependent ribosomal translocation step during translation elongation. During this step, the ribosome changes from the pre-translocational (PRE) to the post-translocational (POST) state as the newly formed A-site-bound peptidyl-tRNA and P-site-bound deacylated tRNA move to the P and E sites, respectively. Catalyzes the coordinated movement of the two tRNA molecules, the mRNA and conformational changes in the ribosome. The protein is Elongation factor G of Mycolicibacterium gilvum (strain PYR-GCK) (Mycobacterium gilvum (strain PYR-GCK)).